The sequence spans 261 residues: Cytochrome c oxidase subunit 3 (261 aa).

At 1 to 15 (MTHQTHSYHMVNPSP) the chain is on the mitochondrial matrix side. A helical membrane pass occupies residues 16 to 34 (WPLTGALSALLMTSGLIMW). Over 35-40 (FHFNSM) the chain is Mitochondrial intermembrane. The chain crosses the membrane as a helical span at residues 41 to 66 (ILLTLGLSTNILTMYQWWRDIIREST). Residues 67–72 (FQGHHT) lie on the Mitochondrial matrix side of the membrane. A helical transmembrane segment spans residues 73-105 (PTVQKGLRYGMILFIVSEVLFFTGFFWAFYHSS). Residues 106-128 (LAPTPELGGCWPPTGIHPLNPLE) lie on the Mitochondrial intermembrane side of the membrane. The chain crosses the membrane as a helical span at residues 129–152 (VPLLNTSVLLASGVSITWAHHSLM). Over 153–155 (EGN) the chain is Mitochondrial matrix. Residues 156–183 (RKHMLQALFITIALGLYFTLLQASEYYE) traverse the membrane as a helical segment. At 184–190 (APFTISD) the chain is on the mitochondrial intermembrane side. The helical transmembrane segment at 191 to 223 (GIYGSTFFVATGFHGLHVIIGSTFLIVCFLRQV) threads the bilayer. Over 224–232 (KFHFTSNHH) the chain is Mitochondrial matrix. A helical membrane pass occupies residues 233–256 (FGFERAAWYWHFVDVVWLFLYVSI). Residues 257 to 261 (YWWGS) are Mitochondrial intermembrane-facing.

Belongs to the cytochrome c oxidase subunit 3 family. In terms of assembly, component of the cytochrome c oxidase (complex IV, CIV), a multisubunit enzyme composed of 14 subunits. The complex is composed of a catalytic core of 3 subunits MT-CO1, MT-CO2 and MT-CO3, encoded in the mitochondrial DNA, and 11 supernumerary subunits COX4I, COX5A, COX5B, COX6A, COX6B, COX6C, COX7A, COX7B, COX7C, COX8 and NDUFA4, which are encoded in the nuclear genome. The complex exists as a monomer or a dimer and forms supercomplexes (SCs) in the inner mitochondrial membrane with NADH-ubiquinone oxidoreductase (complex I, CI) and ubiquinol-cytochrome c oxidoreductase (cytochrome b-c1 complex, complex III, CIII), resulting in different assemblies (supercomplex SCI(1)III(2)IV(1) and megacomplex MCI(2)III(2)IV(2)).

It is found in the mitochondrion inner membrane. It carries out the reaction 4 Fe(II)-[cytochrome c] + O2 + 8 H(+)(in) = 4 Fe(III)-[cytochrome c] + 2 H2O + 4 H(+)(out). Component of the cytochrome c oxidase, the last enzyme in the mitochondrial electron transport chain which drives oxidative phosphorylation. The respiratory chain contains 3 multisubunit complexes succinate dehydrogenase (complex II, CII), ubiquinol-cytochrome c oxidoreductase (cytochrome b-c1 complex, complex III, CIII) and cytochrome c oxidase (complex IV, CIV), that cooperate to transfer electrons derived from NADH and succinate to molecular oxygen, creating an electrochemical gradient over the inner membrane that drives transmembrane transport and the ATP synthase. Cytochrome c oxidase is the component of the respiratory chain that catalyzes the reduction of oxygen to water. Electrons originating from reduced cytochrome c in the intermembrane space (IMS) are transferred via the dinuclear copper A center (CU(A)) of subunit 2 and heme A of subunit 1 to the active site in subunit 1, a binuclear center (BNC) formed by heme A3 and copper B (CU(B)). The BNC reduces molecular oxygen to 2 water molecules using 4 electrons from cytochrome c in the IMS and 4 protons from the mitochondrial matrix. This is Cytochrome c oxidase subunit 3 (MT-CO3) from Balaenoptera musculus (Blue whale).